A 342-amino-acid chain; its full sequence is D-erythrose-4-phosphate dehydrogenase (342 aa).

12–13 (RI) contributes to the NAD(+) binding site. Residues 154–156 (SCT), R200, 213–214 (TK), and R236 contribute to the substrate site. C155 serves as the catalytic Nucleophile. N318 provides a ligand contact to NAD(+).

The protein belongs to the glyceraldehyde-3-phosphate dehydrogenase family. Epd subfamily. In terms of assembly, homotetramer.

It is found in the cytoplasm. It carries out the reaction D-erythrose 4-phosphate + NAD(+) + H2O = 4-phospho-D-erythronate + NADH + 2 H(+). It participates in cofactor biosynthesis; pyridoxine 5'-phosphate biosynthesis; pyridoxine 5'-phosphate from D-erythrose 4-phosphate: step 1/5. In terms of biological role, catalyzes the NAD-dependent conversion of D-erythrose 4-phosphate to 4-phosphoerythronate. The sequence is that of D-erythrose-4-phosphate dehydrogenase from Klebsiella pneumoniae subsp. pneumoniae (strain ATCC 700721 / MGH 78578).